We begin with the raw amino-acid sequence, 381 residues long: Gustatory and pheromone receptor 39a, isoform D (381 aa).

Topologically, residues 1–43 are cytoplasmic; it reads MKRNAFEELRVQLRTLKWLGVLRFTIDFNKCLVRENASEERSA. Residues 44-64 form a helical membrane-spanning segment; the sequence is WLYLIGVVGITCSLIVYSTYF. At 65–78 the chain is on the extracellular side; sequence PSHFIMGKHNTTGN. N-linked (GlcNAc...) asparagine glycosylation is present at N74. A helical transmembrane segment spans residues 79–101; that stretch reads CYALINIRSCSIVTMLIYTQLYI. Residues 102–128 lie on the Cytoplasmic side of the membrane; that stretch reads QRFRFVALLQSILRFNQISGSHREEGR. A helical membrane pass occupies residues 129–149; that stretch reads FAFYYYTHLSLLIICMLNYAY. Residues 150 to 172 are Extracellular-facing; it reads GYWTAGVRLTTIPIYLLQYGFSY. A helical transmembrane segment spans residues 173–193; that stretch reads LFLGQVVVLFACIQQILLSIL. Residues 194–234 lie on the Cytoplasmic side of the membrane; it reads KYYNQVVLKNIKSSKESREFYYNFCKYNQVIWLSYTEINHC. A helical membrane pass occupies residues 235-255; it reads FGLLLLLVTGLILLITPSGPF. The Extracellular portion of the chain corresponds to 256–273; sequence YLVSTIFEGRFRQNWQFS. The helical transmembrane segment at 274–294 threads the bilayer; the sequence is LMSFTAILWSLPWIVLLVLAM. The Cytoplasmic portion of the chain corresponds to 295-350; it reads GRNDVQKEANKTAKMLTKVPRTGTGLDRMIEKFLLKNLRQKPILTAYGFFALDKST. The helical transmembrane segment at 351–371 threads the bilayer; the sequence is LFKLFTAIFTYMVILVQFKEM. Residues 372-381 are Extracellular-facing; that stretch reads ENSTKSINKF. N-linked (GlcNAc...) asparagine glycosylation occurs at N373.

Belongs to the insect chemoreceptor superfamily. Gustatory receptor (GR) family. Gr21a subfamily. Expressed in the adult labellar chemosensory neurons and adult thorax and abdomen.

The protein resides in the cell membrane. Gustatory receptor which mediates acceptance or avoidance behavior, depending on its substrates. Plays a role in sustaining courtship behavior in males, possibly through the reception of a stimulating arrestant pheromone. This is Gustatory and pheromone receptor 39a, isoform D (Gr39a) from Drosophila melanogaster (Fruit fly).